Reading from the N-terminus, the 476-residue chain is Transposase for transposon Tn5 (476 aa).

The interval Met1–Ser70 is interaction with DNA. Mg(2+) is bound by residues Asp97 and Asp188. 2 interaction with DNA regions span residues Tyr237 to Asn255 and Tyr319 to Asn348. Glu326 contacts Mg(2+). Positions Ser369–Ile476 are important for dimerization.

This sequence belongs to the transposase 11 family. As to quaternary structure, monomer. Homodimer of tnp (isoform 1), and heterodimer of tnp (isoform 1) and inh (isoform 2). The cofactor is Mg(2+).

Mediates transposition of transposon Tn5 by a 'cut and paste' mechanism. First, the monomeric transposase binds the 19 bp inverted DNA repeats flanking the transposon. Then, dimerization of the DNA-bound transposase creates a synaptic DNA complex. After nicking of the first DNA strand, excision of the transposon proceeds through a series of intermediates. The transposase then mediates the insertion of the transposon at a new site by strand transfer. The activity of the wild-type transposase is very low, and is further inhibited by dimerization with the transposase inhibitor (inh). The chain is Transposase for transposon Tn5 (tnpA) from Escherichia coli.